We begin with the raw amino-acid sequence, 290 residues long: 4-diphosphocytidyl-2-C-methyl-D-erythritol kinase (290 aa).

Residue Lys11 is part of the active site. 97–107 (PVAAGIGGGSS) provides a ligand contact to ATP. Asp139 is a catalytic residue.

It belongs to the GHMP kinase family. IspE subfamily.

The enzyme catalyses 4-CDP-2-C-methyl-D-erythritol + ATP = 4-CDP-2-C-methyl-D-erythritol 2-phosphate + ADP + H(+). Its pathway is isoprenoid biosynthesis; isopentenyl diphosphate biosynthesis via DXP pathway; isopentenyl diphosphate from 1-deoxy-D-xylulose 5-phosphate: step 3/6. Functionally, catalyzes the phosphorylation of the position 2 hydroxy group of 4-diphosphocytidyl-2C-methyl-D-erythritol. This is 4-diphosphocytidyl-2-C-methyl-D-erythritol kinase from Methylobacterium radiotolerans (strain ATCC 27329 / DSM 1819 / JCM 2831 / NBRC 15690 / NCIMB 10815 / 0-1).